Consider the following 49-residue polypeptide: Large ribosomal subunit protein bL33B (49 aa).

It belongs to the bacterial ribosomal protein bL33 family.

The chain is Large ribosomal subunit protein bL33B from Bacillus cereus (strain ATCC 14579 / DSM 31 / CCUG 7414 / JCM 2152 / NBRC 15305 / NCIMB 9373 / NCTC 2599 / NRRL B-3711).